The chain runs to 476 residues: Proline--tRNA ligase 2 (476 aa).

The protein belongs to the class-II aminoacyl-tRNA synthetase family. ProS type 3 subfamily. As to quaternary structure, homodimer.

The protein localises to the cytoplasm. The catalysed reaction is tRNA(Pro) + L-proline + ATP = L-prolyl-tRNA(Pro) + AMP + diphosphate. Its function is as follows. Catalyzes the attachment of proline to tRNA(Pro) in a two-step reaction: proline is first activated by ATP to form Pro-AMP and then transferred to the acceptor end of tRNA(Pro). The sequence is that of Proline--tRNA ligase 2 from Bacillus cereus (strain ZK / E33L).